A 585-amino-acid chain; its full sequence is Probable inactive serine/threonine-protein kinase slob1 (585 aa).

The FYVE-type zinc-finger motif lies at 21 to 82; the sequence is DQSSLECNDC…LCRSCNNSFE (62 aa). Zn(2+) is bound by residues Cys-27, Cys-30, Cys-43, Cys-46, Cys-51, Cys-54, Cys-74, and Cys-77. Residues 108-478 enclose the Protein kinase domain; it reads SKPLQDIGHT…STSLLNNSFN (371 aa). 2 stretches are compositionally biased toward low complexity: residues 426–456 and 466–503; these read ISKL…NISS and LPSS…ISSP. The segment at 426 to 585 is disordered; the sequence is ISKLSSSSSN…SLKPSSTKKK (160 aa). The span at 513–532 shows a compositional bias: pro residues; sequence TPPPPPPPPKSAPPPPPPPS. Residues 533-542 are compositionally biased toward low complexity; sequence SSKLPPSSSS. Residues 542–562 enclose the WH2 domain; sequence SRNSLLESIRNADNAKKLKKT.

The protein belongs to the protein kinase superfamily. Ser/Thr protein kinase family.

This chain is Probable inactive serine/threonine-protein kinase slob1 (slob1), found in Dictyostelium discoideum (Social amoeba).